The following is a 461-amino-acid chain: Polycomb group protein FIE1 (461 aa).

A compositionally biased stretch (basic residues) spans 1 to 11; sequence MPPSKARRKRS. Positions 1–56 are disordered; sequence MPPSKARRKRSLRDITATVATGTVANSKPGSSSTNEGKQQDKKKEGPQEPDIPPLP. Polar residues predominate over residues 18–37; that stretch reads TVATGTVANSKPGSSSTNEG. Positions 38 to 47 are enriched in basic and acidic residues; it reads KQQDKKKEGP. 6 WD repeats span residues 143–186, 189–229, 235–275, 301–338, 351–391, and 398–437; these read DKDE…LDKS, GHGG…CILV, GHRH…IYVE, VHSD…RRPG, PKCS…PVLI, and ECKS…ASSS. The segment at 429-461 is disordered; the sequence is EVDPAASSSKPDQAAAPAAGVGAGAGADADADA. Over residues 432–448 the composition is skewed to low complexity; it reads PAASSSKPDQAAAPAAG.

It belongs to the WD repeat ESC family. As to expression, specifically expressed in kernel starting from 6 days after pollination.

It is found in the nucleus. Functionally, polycomb group (PcG) protein. PcG proteins act by forming multiprotein complexes, which are required to maintain the transcriptionally repressive state of homeotic genes throughout development. PcG proteins are not required to initiate repression, but to maintain it during later stages of development. They probably act via the methylation of histones, rendering chromatin heritably changed in its expressibility. In Zea mays (Maize), this protein is Polycomb group protein FIE1 (FIE1).